The following is a 231-amino-acid chain: Fibrillarin-like rRNA/tRNA 2'-O-methyltransferase (231 aa).

Residues 89–90, 108–109, 133–134, and 153–156 each bind S-adenosyl-L-methionine; these read TT, EF, DA, and DIAQ.

It belongs to the methyltransferase superfamily. Fibrillarin family. Interacts with nop5. Component of box C/D small ribonucleoprotein (sRNP) particles that contain rpl7ae, FlpA and nop5, plus a guide RNA.

In terms of biological role, involved in pre-rRNA and tRNA processing. Utilizes the methyl donor S-adenosyl-L-methionine to catalyze the site-specific 2'-hydroxyl methylation of ribose moieties in rRNA and tRNA. Site specificity is provided by a guide RNA that base pairs with the substrate. Methylation occurs at a characteristic distance from the sequence involved in base pairing with the guide RNA. The chain is Fibrillarin-like rRNA/tRNA 2'-O-methyltransferase from Sulfolobus acidocaldarius (strain ATCC 33909 / DSM 639 / JCM 8929 / NBRC 15157 / NCIMB 11770).